Reading from the N-terminus, the 92-residue chain is Small ribosomal subunit protein uS19 (92 aa).

The protein belongs to the universal ribosomal protein uS19 family.

Functionally, protein S19 forms a complex with S13 that binds strongly to the 16S ribosomal RNA. This chain is Small ribosomal subunit protein uS19, found in Dinoroseobacter shibae (strain DSM 16493 / NCIMB 14021 / DFL 12).